A 138-amino-acid polypeptide reads, in one-letter code: Putative pre-16S rRNA nuclease (138 aa).

The protein belongs to the YqgF nuclease family.

It localises to the cytoplasm. In terms of biological role, could be a nuclease involved in processing of the 5'-end of pre-16S rRNA. This Bacteroides fragilis (strain ATCC 25285 / DSM 2151 / CCUG 4856 / JCM 11019 / LMG 10263 / NCTC 9343 / Onslow / VPI 2553 / EN-2) protein is Putative pre-16S rRNA nuclease.